Reading from the N-terminus, the 217-residue chain is Probable transaldolase (217 aa).

The active-site Schiff-base intermediate with substrate is the K83.

Belongs to the transaldolase family. Type 3B subfamily.

Its subcellular location is the cytoplasm. It catalyses the reaction D-sedoheptulose 7-phosphate + D-glyceraldehyde 3-phosphate = D-erythrose 4-phosphate + beta-D-fructose 6-phosphate. It functions in the pathway carbohydrate degradation; pentose phosphate pathway; D-glyceraldehyde 3-phosphate and beta-D-fructose 6-phosphate from D-ribose 5-phosphate and D-xylulose 5-phosphate (non-oxidative stage): step 2/3. Its function is as follows. Transaldolase is important for the balance of metabolites in the pentose-phosphate pathway. The protein is Probable transaldolase of Lactiplantibacillus plantarum (strain ATCC BAA-793 / NCIMB 8826 / WCFS1) (Lactobacillus plantarum).